The primary structure comprises 1051 residues: MTAELQQDDSAGAADGHGSSCQMLLNQLREITGIQDPSFLHEALKASNGDITQAVSLLTDQRVKEPSHDTTAAEPSEVEESATSKDLLAKVIDLTHDNKDDLQAAIALSLLESPNIQADNRDLNRAHEANSAETKRSKRKRCEVWGENHNPNNWRRVDGWPVGLKNVGNTCWFSAVIQSLFQLPEFRRLVLSYNLPQNILENCRSHTEKRNIMFMQELQYLFALLLGSNRKFVDPSAALDLLKGAFRSSEEQQQDVSEFTHKLLDWLEDAFQLAVNVNSHLRNKSENPMVQLFYGTFLTEGVREGKPFCNNETFGQYPLQVNGYHNLDECLEGAMVEGDIALLPSDRSVKYGQERWFTKLPPVLTFELSRFEFNQSLGQPEKIHNKLEFPQIIYMDRYMYKSKELIRSKRESVRKLKEEIQVLQQKLERYVKYGSGPSRFPLPDMLKYVIEFASTKPASESCLSGSAEHVTLPLPSVHCPISDLTPKESSSPESCSQNAGSTFSSPEDALPSSEGMNGPFTSPHSSLETPAPPAPRTVTDEEMNFVKTCLQRWRSEIEQDIQDLKNCISSSTKAIEQMYCDPLLRQVPYRLHAVLVHEGQASAGHYWAYIYNQPRQTWLKYNDISVTESSWEELERDSYGGLRNVSAYCLMYINDNLPHFSAEASSNESDETAGEVEALSVELRQYIQEDNWRFQQEVEEWEEEQSCKIPQMESSPNSSSQDFSTSQESPAVSSHEVRCLSSEHAVIAKEQTAQAIANTAHAYEKSGVEAALSEAFHEEYSRLYQLAKETPTSHSDPRLQHVLVYFFQNEAPKRVVERTLLEQFADRNLSYDERSISIMKVAQAKLMEIGPDDMNMEEYKRWHEDYSLFRKVSVYLLTGLELFQKGKYQEALSYLVYAYQSNAGLLVKGPRRGVKESVIALYRRKCLLELNAKAASLFETNDDHSVTEGINVMNELIIPCIHLIINNDISKDDLDAIEVMRNHWCSYLGKDIAENLQLCLGEFLPRLLDPSAEIIVLKEPPTIRPNSPYDLCNRFAAVMESIQGVSTVTVK.

A disordered region spans residues 60 to 82 (DQRVKEPSHDTTAAEPSEVEESA). Ser67 bears the Phosphoserine mark. A UIM domain is found at 97–116 (DNKDDLQAAIALSLLESPNI). Lys99 participates in a covalent cross-link: Glycyl lysine isopeptide (Lys-Gly) (interchain with G-Cter in SUMO2). Positions 121–135 (RDLNRAHEANSAETK) are enriched in basic and acidic residues. Residues 121–140 (RDLNRAHEANSAETKRSKRK) form a disordered region. A USP domain is found at 162 to 655 (VGLKNVGNTC…SAYCLMYIND (494 aa)). Catalysis depends on Cys171, which acts as the Nucleophile. Position 376 is a phosphoserine (Ser376). The disordered stretch occupies residues 483 to 538 (DLTPKESSSPESCSQNAGSTFSSPEDALPSSEGMNGPFTSPHSSLETPAPPAPRTV). Polar residues-rich tracts occupy residues 487-505 (KESS…TFSS) and 519-528 (PFTSPHSSLE). The residue at position 555 (Ser555) is a Phosphoserine. The active-site Proton acceptor is His605. A disordered region spans residues 703 to 735 (EEQSCKIPQMESSPNSSSQDFSTSQESPAVSSH). A compositionally biased stretch (low complexity) spans 713-730 (ESSPNSSSQDFSTSQESP). Ser720 carries the post-translational modification Phosphoserine. Thr1022 carries the post-translational modification Phosphothreonine.

The protein belongs to the peptidase C19 family. USP28 subfamily. As to quaternary structure, interacts with ZNF304. Interacts with PRKD1. Interacts with TP53BP1. Interacts with FBXW7; following DNA damage, dissociates from FBXW7 leading to degradation of MYC. Degraded upon nickel ion level or hypoxia exposure. In terms of processing, phosphorylated upon DNA damage at Ser-67 and Ser-720, by ATM or ATR. Phosphorylated by PRKD1.

It is found in the nucleus. The protein resides in the nucleoplasm. It catalyses the reaction Thiol-dependent hydrolysis of ester, thioester, amide, peptide and isopeptide bonds formed by the C-terminal Gly of ubiquitin (a 76-residue protein attached to proteins as an intracellular targeting signal).. Functionally, deubiquitinase involved in DNA damage response checkpoint and MYC proto-oncogene stability. Involved in DNA damage induced apoptosis by specifically deubiquitinating proteins of the DNA damage pathway such as CLSPN. Also involved in G2 DNA damage checkpoint, by deubiquitinating CLSPN, and preventing its degradation by the anaphase promoting complex/cyclosome (APC/C). In contrast, it does not deubiquitinate PLK1. Specifically deubiquitinates MYC in the nucleoplasm, leading to prevent MYC degradation by the proteasome: acts by specifically interacting with FBXW7 (FBW7alpha) in the nucleoplasm and counteracting ubiquitination of MYC by the SCF(FBXW7) complex. Deubiquitinates ZNF304, hence preventing ZNF304 degradation by the proteasome and leading to the activated KRAS-mediated promoter hypermethylation and transcriptional silencing of tumor suppressor genes (TSGs) in a subset of colorectal cancers (CRC) cells. This chain is Ubiquitin carboxyl-terminal hydrolase 28 (Usp28), found in Mus musculus (Mouse).